We begin with the raw amino-acid sequence, 1063 residues long: Structural polyprotein (1063 aa).

Positions 1–131 (MASTTPITME…LGPPTNPFQA (131 aa)) are disordered. A human C1QBP/SF2P32-binding region spans residues 30 to 69 (GASQPRRPRPPRQRDSSTSGDDSGRDSGGPRRRRGNRGRG). A Phosphoserine; by host modification is found at S46. A compositionally biased stretch (basic residues) spans 59-69 (PRRRRGNRGRG). Positions 70 to 87 (QRKDWSRAPPPPEERQEG) are enriched in basic and acidic residues. Residues 93–107 (APKPSRAPPQQPQPP) are compositionally biased toward pro residues. C153 and C197 are joined by a disulfide. Residues 279–300 (GAPQAFLAGLLLAAVAVGTARA) form a functions as E2 signal peptide region. The Extracellular portion of the chain corresponds to 301-534 (GLQPRVDMAA…LWLATANALS (234 aa)). N353, N371, and N429 each carry an N-linked (GlcNAc...) asparagine; by host glycan. The chain crosses the membrane as a helical span at residues 535–555 (LDHALAAFVLLVPWVLIFMVC). Over 556-582 (RRACRRRGAAAALTAVVLQGYNPPAYG) the chain is Cytoplasmic. The tract at residues 563-582 (GAAAALTAVVLQGYNPPAYG) is functions as E1 signal peptide. Topologically, residues 583–1028 (EEAFTYLCTA…QTWAEWAAAH (446 aa)) are extracellular. Disulfide bonds link C590-C595, C619-C824, C641-C653, C699-C712, C758-C767, C807-C817, C931-C934, and C950-C983. N658 is a glycosylation site (N-linked (GlcNAc...) asparagine; by host). The Ca(2+) site is built by N670 and A671. The Ca(2+) site is built by D718 and T719. N791 carries N-linked (GlcNAc...) asparagine; by host glycosylation. T1011 and T1012 each carry an O-linked (GalNAc...) threonine; by host glycan. The helical transmembrane segment at 1029-1049 (WWQLTLGAICALPLAGLLACC) threads the bilayer. Over 1050–1063 (AKCLYYLRGAIAPR) the chain is Extracellular.

Homodimer; further assembles into homooligomer. Interacts with human C1QBP. Interacts (via N-terminus) with protease/methyltransferase p150. As to quaternary structure, heterodimer with spike glycoprotein E2. In terms of assembly, heterodimer with spike glycoprotein E1. Post-translationally, structural polyprotein: Specific enzymatic cleavages in vivo yield mature proteins. Two signal peptidase-mediated cleavages within the polyprotein produce the structural proteins capsid, E2, and E1. The E2 signal peptide remains attached to the C-terminus of the capsid protein after cleavage by the signal peptidase. Another signal peptide at E2 C-terminus directs E1 to the ER, with a similar mechanism. In terms of processing, contains three N-linked oligosaccharides. Capsid is phosphorylated on Ser-46 by host. This phosphorylation negatively regulates capsid protein RNA-binding activity. Dephosphorylated by human PP1A.

The protein resides in the virion. It localises to the host cytoplasm. It is found in the host mitochondrion. The protein localises to the virion membrane. Its subcellular location is the host Golgi apparatus membrane. In terms of biological role, capsid protein interacts with genomic RNA and assembles into icosahedric core particles 65-70 nm in diameter. The resulting nucleocapsid eventually associates with the cytoplasmic domain of E2 at the cell membrane, leading to budding and formation of mature virions from host Golgi membranes. Phosphorylation negatively regulates RNA-binding activity, possibly delaying virion assembly during the viral replication phase. Capsid protein dimerizes and becomes disulfide-linked in the virion. Modulates genomic RNA replication. Modulates subgenomic RNA synthesis by interacting with human C1QBP/SF2P32. Induces both perinuclear clustering of mitochondria and the formation of electron-dense intermitochondrial plaques, both hallmarks of rubella virus infected cells. Induces apoptosis when expressed in transfected cells. Its function is as follows. Responsible for viral attachment to target host cell, by binding to the cell receptor. Its transport to the plasma membrane depends on interaction with E1 protein. The surface glycoproteins display an irregular helical organization and a pseudo-tetrameric inner nucleocapsid arrangement. Functionally, class II viral fusion protein. Fusion activity is inactive as long as E1 is bound to E2 in mature virion. After virus attachment to target cell and clathrin-mediated endocytosis, acidification of the endosome would induce dissociation of E1/E2 heterodimer and concomitant trimerization of the E1 subunits. This E1 homotrimer is fusion active, and promotes release of viral nucleocapsid in cytoplasm after endosome and viral membrane fusion. The cytoplasmic tail of spike glycoprotein E1 modulates virus release. The surface glycoproteins display an irregular helical organization and a pseudo-tetrameric inner nucleocapsid arrangement. In Rubella virus (strain Cendehill) (RUBV), this protein is Structural polyprotein.